Here is a 237-residue protein sequence, read N- to C-terminus: Proteasome subunit alpha type-5 (237 aa).

This sequence belongs to the peptidase T1A family. As to quaternary structure, the 26S proteasome consists of a 20S proteasome core and two 19S regulatory subunits. The 20S proteasome core is composed of 28 subunits that are arranged in four stacked rings, resulting in a barrel-shaped structure. The two end rings are each formed by seven alpha subunits, and the two central rings are each formed by seven beta subunits. The catalytic chamber with the active sites is on the inside of the barrel.

The protein resides in the cytoplasm. The protein localises to the nucleus. Functionally, the proteasome is a multicatalytic proteinase complex which is characterized by its ability to cleave peptides with Arg, Phe, Tyr, Leu, and Glu adjacent to the leaving group at neutral or slightly basic pH. The proteasome has an ATP-dependent proteolytic activity. This is Proteasome subunit alpha type-5 (PAE1) from Oryza sativa subsp. japonica (Rice).